The sequence spans 224 residues: Serum amyloid P-component (224 aa).

The signal sequence occupies residues 1–19 (MERLLLWVSVLASLPEAFA). Positions 24–224 (TGKVFVFPRE…YVVIKPRVWS (201 aa)) constitute a Pentraxin (PTX) domain. N51 carries N-linked (GlcNAc...) asparagine glycosylation. C55 and C114 are joined by a disulfide. 6 residues coordinate Ca(2+): D77, N78, E155, Q156, D157, and Q167.

The protein belongs to the pentraxin family. In terms of assembly, homopentamer. Pentraxin (or pentaxin) have a discoid arrangement of 5 non-covalently bound subunits. The cofactor is Ca(2+).

It localises to the secreted. The chain is Serum amyloid P-component (APCS) from Sus scrofa (Pig).